The primary structure comprises 438 residues: MSQANAATKASSDVFFNASLEDIDPEIFGAIRNELGRQRHEIELIASENIVSRAVLEAQGSILTNKYAEGYPGKRYYGGCQYVDVVEELAIERAKKLFSAEFANVQPNSGSQMNQAVFLALLQPGDTFMGLDLNSGGHLTHGSPVNMSGKWFNVVSYGVRKDDHLLDMDEVARLARENKPKLILAGGTAYSRIWDWKRFREIADEVGAYLMVDMAHIAGLVAGGQHPSPVPHAHVCTTTTHKSLRGPRGGMILTNDADIAKKINSAVFPGLQGGPLMHVIAGKAVAFAEALKLEFKLYAKNVVDNARALAEELKSHGLDIVSGGTDNHLMLVDLRPKNATGKRAEAALGRANITCNKNGIPFDPEKPFVTSGVRLGTPAGTTRGFGVAEFKEIGSLIAEVLDGLKVANSDEGNAAVEQAVKEKVIALTGRFPMYGYQG.

(6S)-5,6,7,8-tetrahydrofolate contacts are provided by residues Leu133 and 137-139 (GHL). N6-(pyridoxal phosphate)lysine is present on Lys242.

The protein belongs to the SHMT family. As to quaternary structure, homodimer. The cofactor is pyridoxal 5'-phosphate.

It is found in the cytoplasm. It catalyses the reaction (6R)-5,10-methylene-5,6,7,8-tetrahydrofolate + glycine + H2O = (6S)-5,6,7,8-tetrahydrofolate + L-serine. It functions in the pathway one-carbon metabolism; tetrahydrofolate interconversion. The protein operates within amino-acid biosynthesis; glycine biosynthesis; glycine from L-serine: step 1/1. Functionally, catalyzes the reversible interconversion of serine and glycine with tetrahydrofolate (THF) serving as the one-carbon carrier. This reaction serves as the major source of one-carbon groups required for the biosynthesis of purines, thymidylate, methionine, and other important biomolecules. Also exhibits THF-independent aldolase activity toward beta-hydroxyamino acids, producing glycine and aldehydes, via a retro-aldol mechanism. The polypeptide is Serine hydroxymethyltransferase (Brucella canis (strain ATCC 23365 / NCTC 10854 / RM-666)).